A 169-amino-acid polypeptide reads, in one-letter code: Disulfide bond formation protein B 1 (169 aa).

Topologically, residues 1–14 (MSDNTLYLRREKRF) are cytoplasmic. Residues 15–31 (LVLLGIICLALIGGALY) traverse the membrane as a helical segment. Residues 32–49 (MQIVLGEAPCPLCILQRY) lie on the Periplasmic side of the membrane. A disulfide bridge connects residues Cys-41 and Cys-44. The helical transmembrane segment at 50–64 (ALLFIAIFAFIGAAM) threads the bilayer. The Cytoplasmic portion of the chain corresponds to 65 to 71 (SGRRGVT). The chain crosses the membrane as a helical span at residues 72–89 (VCETLVTLSALGGIAAAG). Over 90–144 (RHVWILAHPSDSCGIDVLQPIVDGLPLATLFPTGFQVSGFCTTPYPPVLGLSLAQ) the chain is Periplasmic. Cys-102 and Cys-130 are oxidised to a cystine. Residues 145–163 (WALAAFVLTAVLVPACIIR) form a helical membrane-spanning segment. At 164–169 (NRRKPY) the chain is on the cytoplasmic side.

This sequence belongs to the DsbB family.

The protein resides in the cell inner membrane. Its function is as follows. Required for disulfide bond formation in some periplasmic proteins. Acts by oxidizing the DsbA protein. The sequence is that of Disulfide bond formation protein B 1 from Pseudomonas savastanoi pv. phaseolicola (strain 1448A / Race 6) (Pseudomonas syringae pv. phaseolicola (strain 1448A / Race 6)).